A 141-amino-acid polypeptide reads, in one-letter code: Small ribosomal subunit protein uS12 (141 aa).

This sequence belongs to the universal ribosomal protein uS12 family. In terms of assembly, part of the 30S ribosomal subunit.

Its function is as follows. With S4 and S5 plays an important role in translational accuracy. Located at the interface of the 30S and 50S subunits. In Methanosphaera stadtmanae (strain ATCC 43021 / DSM 3091 / JCM 11832 / MCB-3), this protein is Small ribosomal subunit protein uS12.